A 265-amino-acid chain; its full sequence is MIKWPWKVQESAHQTALPWQEALSIPLLTCLTEQEQSKLVTLAERFLQQKRLVPLQGFELDSLRSCRIALLFCLPVLELGLEWLDGFHEVLIYPAPFVVDDEWEDDIGLVHNQRIVQSGQSWQQGPIVLNWLDIQDSFDASGFNLIIHEVAHKLDTRNGDRASGVPFIPLREVAGWEHDLHAAMNNIQEEIELVGENAASIDAYAASDPAECFAVLSEYFFSAPELFAPRFPSLWQRFCQFYQQDPLQRLHRTNDTDSFSATNVH.

Zn(2+) contacts are provided by His-111, His-148, His-152, and Glu-211.

The protein belongs to the MtfA family. Interacts with Mlc. Requires Zn(2+) as cofactor.

Its subcellular location is the cytoplasm. Involved in the modulation of the activity of the glucose-phosphotransferase system (glucose-PTS). Interacts with the transcriptional repressor Mlc, preventing its interaction with DNA and leading to the modulation of expression of genes regulated by Mlc, including ptsG, which encodes the PTS system glucose-specific EIICB component. Functionally, shows zinc-dependent metallopeptidase activity. The polypeptide is Mlc titration factor A (Escherichia coli O8 (strain IAI1)).